We begin with the raw amino-acid sequence, 303 residues long: Proteasome subunit beta (303 aa).

Residues 1–67 (MTWQFPDRLS…SGGTGQLPHG (67 aa)) constitute a propeptide, removed in mature form; by autocatalysis. The active-site Nucleophile is the Thr-68.

Belongs to the peptidase T1B family. As to quaternary structure, the 20S proteasome core is composed of 14 alpha and 14 beta subunits that assemble into four stacked heptameric rings, resulting in a barrel-shaped structure. The two inner rings, each composed of seven catalytic beta subunits, are sandwiched by two outer rings, each composed of seven alpha subunits. The catalytic chamber with the active sites is on the inside of the barrel. Has a gated structure, the ends of the cylinder being occluded by the N-termini of the alpha-subunits. Is capped by the proteasome-associated ATPase, ARC.

The protein localises to the cytoplasm. It catalyses the reaction Cleavage of peptide bonds with very broad specificity.. The protein operates within protein degradation; proteasomal Pup-dependent pathway. With respect to regulation, the formation of the proteasomal ATPase ARC-20S proteasome complex, likely via the docking of the C-termini of ARC into the intersubunit pockets in the alpha-rings, may trigger opening of the gate for substrate entry. Interconversion between the open-gate and close-gate conformations leads to a dynamic regulation of the 20S proteasome proteolysis activity. Functionally, component of the proteasome core, a large protease complex with broad specificity involved in protein degradation. This is Proteasome subunit beta from Mycolicibacterium paratuberculosis (strain ATCC BAA-968 / K-10) (Mycobacterium paratuberculosis).